The chain runs to 407 residues: Formate-dependent phosphoribosylglycinamide formyltransferase (407 aa).

Residues 28-29 (EL) and E88 contribute to the N(1)-(5-phospho-beta-D-ribosyl)glycinamide site. ATP contacts are provided by residues R121, K162, 167 to 172 (SSGKGQ), 202 to 205 (EGFI), and E210. The 195-residue stretch at 126-320 (RLAAEELGVA…EFELHAKAIL (195 aa)) folds into the ATP-grasp domain. Residues E279 and E291 each contribute to the Mg(2+) site. N(1)-(5-phospho-beta-D-ribosyl)glycinamide contacts are provided by residues D298, K367, and 374-375 (RR).

This sequence belongs to the PurK/PurT family. Homodimer.

The enzyme catalyses N(1)-(5-phospho-beta-D-ribosyl)glycinamide + formate + ATP = N(2)-formyl-N(1)-(5-phospho-beta-D-ribosyl)glycinamide + ADP + phosphate + H(+). The protein operates within purine metabolism; IMP biosynthesis via de novo pathway; N(2)-formyl-N(1)-(5-phospho-D-ribosyl)glycinamide from N(1)-(5-phospho-D-ribosyl)glycinamide (formate route): step 1/1. In terms of biological role, involved in the de novo purine biosynthesis. Catalyzes the transfer of formate to 5-phospho-ribosyl-glycinamide (GAR), producing 5-phospho-ribosyl-N-formylglycinamide (FGAR). Formate is provided by PurU via hydrolysis of 10-formyl-tetrahydrofolate. The sequence is that of Formate-dependent phosphoribosylglycinamide formyltransferase from Herminiimonas arsenicoxydans.